We begin with the raw amino-acid sequence, 230 residues long: UPF0173 metal-dependent hydrolase Rsph17025_2229 (230 aa).

It belongs to the UPF0173 family.

In Cereibacter sphaeroides (strain ATCC 17025 / ATH 2.4.3) (Rhodobacter sphaeroides), this protein is UPF0173 metal-dependent hydrolase Rsph17025_2229.